The primary structure comprises 228 residues: Max-interacting protein 1 (228 aa).

2 disordered regions span residues 30-76 (YASS…NELE) and 160-228 (SIGS…SFAS). The span at 43–56 (QHSKPPRRLSRAQK) shows a compositional bias: basic residues. The span at 57-70 (HSSGSSNTSTANRS) shows a compositional bias: polar residues. In terms of domain architecture, bHLH spans 67-119 (ANRSTHNELEKNRRAHLRLCLERLKVLIPLGPDCTRHTTLGLLNKAKAHIKKL). A compositionally biased stretch (acidic residues) spans 173–183 (EREEIEVDVES). Polar residues predominate over residues 207-228 (SLQSVGSDEGYSSASVKLSFAS).

In terms of assembly, efficient DNA binding requires dimerization with another bHLH protein. Binds DNA as a heterodimer with MAX. Interacts with SMC3. Interacts with RNF17.

The protein localises to the nucleus. Its function is as follows. Transcriptional repressor. MXI1 binds with MAX to form a sequence-specific DNA-binding protein complex which recognizes the core sequence 5'-CAC[GA]TG-3'. MXI1 thus antagonizes MYC transcriptional activity by competing for MAX. Isoform Short, which lacks a segment, has a much stronger suppressive potential and associates with a SIN3 homologous protein. This Mus musculus (Mouse) protein is Max-interacting protein 1 (Mxi1).